Here is a 380-residue protein sequence, read N- to C-terminus: 1-deoxy-D-xylulose 5-phosphate reductoisomerase (380 aa).

NADPH is bound by residues Ser10, Gly11, Ser12, Ile13, Gly36, Lys37, Asn38, and Asn120. 1-deoxy-D-xylulose 5-phosphate is bound at residue Lys121. Glu122 serves as a coordination point for NADPH. Residue Asp146 participates in Mn(2+) binding. 1-deoxy-D-xylulose 5-phosphate contacts are provided by Ser147, Glu148, Ser172, and His195. Glu148 serves as a coordination point for Mn(2+). Position 201 (Gly201) interacts with NADPH. Ser208, Asn213, Lys214, and Glu217 together coordinate 1-deoxy-D-xylulose 5-phosphate. Glu217 lines the Mn(2+) pocket.

It belongs to the DXR family. Requires Mg(2+) as cofactor. Mn(2+) serves as cofactor.

It catalyses the reaction 2-C-methyl-D-erythritol 4-phosphate + NADP(+) = 1-deoxy-D-xylulose 5-phosphate + NADPH + H(+). It functions in the pathway isoprenoid biosynthesis; isopentenyl diphosphate biosynthesis via DXP pathway; isopentenyl diphosphate from 1-deoxy-D-xylulose 5-phosphate: step 1/6. Catalyzes the NADPH-dependent rearrangement and reduction of 1-deoxy-D-xylulose-5-phosphate (DXP) to 2-C-methyl-D-erythritol 4-phosphate (MEP). The protein is 1-deoxy-D-xylulose 5-phosphate reductoisomerase of Bacillus cereus (strain ATCC 10987 / NRS 248).